The sequence spans 101 residues: Small ribosomal subunit protein uS10 (101 aa).

The protein belongs to the universal ribosomal protein uS10 family. Part of the 30S ribosomal subunit.

Functionally, involved in the binding of tRNA to the ribosomes. This Rhodococcus erythropolis (strain PR4 / NBRC 100887) protein is Small ribosomal subunit protein uS10.